Reading from the N-terminus, the 122-residue chain is Small ribosomal subunit protein bS16 (122 aa).

Residues 85-122 (REAKNNPIKAKPGKRAQERAAEKAQKAADAAAAADAAE) are disordered. Residues 99–110 (RAQERAAEKAQK) are compositionally biased toward basic and acidic residues. Residues 111-122 (AADAAAAADAAE) are compositionally biased toward low complexity.

Belongs to the bacterial ribosomal protein bS16 family.

The protein is Small ribosomal subunit protein bS16 of Rhizobium etli (strain ATCC 51251 / DSM 11541 / JCM 21823 / NBRC 15573 / CFN 42).